The following is a 137-amino-acid chain: ATP synthase epsilon chain (137 aa).

This sequence belongs to the ATPase epsilon chain family. As to quaternary structure, F-type ATPases have 2 components, CF(1) - the catalytic core - and CF(0) - the membrane proton channel. CF(1) has five subunits: alpha(3), beta(3), gamma(1), delta(1), epsilon(1). CF(0) has three main subunits: a, b and c.

The protein resides in the cell membrane. Its function is as follows. Produces ATP from ADP in the presence of a proton gradient across the membrane. In Mycoplasmopsis synoviae (strain 53) (Mycoplasma synoviae), this protein is ATP synthase epsilon chain.